A 355-amino-acid polypeptide reads, in one-letter code: Uroporphyrinogen decarboxylase (355 aa).

Residues 27 to 31 (RQAGR), Asp77, Tyr154, Thr209, and His328 contribute to the substrate site.

It belongs to the uroporphyrinogen decarboxylase family. Homodimer.

The protein resides in the cytoplasm. It catalyses the reaction uroporphyrinogen III + 4 H(+) = coproporphyrinogen III + 4 CO2. It functions in the pathway porphyrin-containing compound metabolism; protoporphyrin-IX biosynthesis; coproporphyrinogen-III from 5-aminolevulinate: step 4/4. Functionally, catalyzes the decarboxylation of four acetate groups of uroporphyrinogen-III to yield coproporphyrinogen-III. The polypeptide is Uroporphyrinogen decarboxylase (Colwellia psychrerythraea (strain 34H / ATCC BAA-681) (Vibrio psychroerythus)).